A 148-amino-acid chain; its full sequence is MKVLVILGLVLLSVMVQGKVFERCELARTLKRLGMDGYRGISLANWMCLAKWESDYNTRATNYNPGDQSTDYGIFQINSHYWCNNGRTPGAVNACHISCNALLQDDITQAVACAKRVVRDPQGIRAWVAWKAHCQNRDVSQYVQGCGV.

An N-terminal signal peptide occupies residues Met1–Gly18. The C-type lysozyme domain occupies Lys19 to Val148. 4 disulfides stabilise this stretch: Cys24–Cys146, Cys48–Cys134, Cys83–Cys99, and Cys95–Cys113. Catalysis depends on residues Glu53 and Asp71.

Belongs to the glycosyl hydrolase 22 family. As to quaternary structure, monomer.

The protein resides in the secreted. The enzyme catalyses Hydrolysis of (1-&gt;4)-beta-linkages between N-acetylmuramic acid and N-acetyl-D-glucosamine residues in a peptidoglycan and between N-acetyl-D-glucosamine residues in chitodextrins.. Lysozymes have primarily a bacteriolytic function; those in tissues and body fluids are associated with the monocyte-macrophage system and enhance the activity of immunoagents. The sequence is that of Lysozyme C (LYZ) from Saimiri sciureus (Common squirrel monkey).